The chain runs to 291 residues: Glycine--tRNA ligase alpha subunit (291 aa).

The protein belongs to the class-II aminoacyl-tRNA synthetase family. As to quaternary structure, tetramer of two alpha and two beta subunits.

The protein localises to the cytoplasm. It carries out the reaction tRNA(Gly) + glycine + ATP = glycyl-tRNA(Gly) + AMP + diphosphate. The protein is Glycine--tRNA ligase alpha subunit of Microcystis aeruginosa (strain NIES-843 / IAM M-2473).